The following is a 351-amino-acid chain: Molybdenum import ATP-binding protein ModC (351 aa).

Residues 1-229 (MLQINVKKQL…PIFAPWKGES (229 aa)) enclose the ABC transporter domain. 31 to 38 (GLSGSGKT) is a binding site for ATP. The Mop domain occupies 289–351 (QTSIRNILRG…YVQIKAVSVM (63 aa)).

Belongs to the ABC transporter superfamily. Molybdate importer (TC 3.A.1.8) family. In terms of assembly, the complex is composed of two ATP-binding proteins (ModC), two transmembrane proteins (ModB) and a solute-binding protein (ModA).

The protein localises to the cell inner membrane. It carries out the reaction molybdate(out) + ATP + H2O = molybdate(in) + ADP + phosphate + H(+). Its function is as follows. Part of the ABC transporter complex ModABC involved in molybdenum import. Responsible for energy coupling to the transport system. The sequence is that of Molybdenum import ATP-binding protein ModC from Haemophilus influenzae (strain ATCC 51907 / DSM 11121 / KW20 / Rd).